The primary structure comprises 395 residues: DDB1- and CUL4-associated factor 4-like protein 2 (395 aa).

2 WD repeats span residues 268–307 and 312–351; these read SHDS…CVTQ and VNNS…LLTT.

The polypeptide is DDB1- and CUL4-associated factor 4-like protein 2 (DCAF4L2) (Homo sapiens (Human)).